The following is a 428-amino-acid chain: Tyrosine--tRNA ligase (428 aa).

Tyrosine 34 provides a ligand contact to L-tyrosine. The short motif at 39–48 (PTADSLHIGH) is the 'HIGH' region element. Tyrosine 171 and glutamine 175 together coordinate L-tyrosine. Positions 236–240 (KFGKT) match the 'KMSKS' region motif. Residue lysine 239 participates in ATP binding. The S4 RNA-binding domain occupies 358–424 (VGLIDLLVDA…GKKKYFLIQV (67 aa)).

It belongs to the class-I aminoacyl-tRNA synthetase family. TyrS type 1 subfamily. Homodimer.

The protein resides in the cytoplasm. It catalyses the reaction tRNA(Tyr) + L-tyrosine + ATP = L-tyrosyl-tRNA(Tyr) + AMP + diphosphate + H(+). Catalyzes the attachment of tyrosine to tRNA(Tyr) in a two-step reaction: tyrosine is first activated by ATP to form Tyr-AMP and then transferred to the acceptor end of tRNA(Tyr). The protein is Tyrosine--tRNA ligase of Oceanobacillus iheyensis (strain DSM 14371 / CIP 107618 / JCM 11309 / KCTC 3954 / HTE831).